The sequence spans 844 residues: Janus kinase and microtubule-interacting protein 3 (844 aa).

The stretch at 8-259 (SRAKGDKAET…LSQAKEAERH (252 aa)) forms a coiled coil. Residues 249–290 (QLSQAKEAERHPGSPRRELPYASGAGDASDHSGSPEQQLDEK) are disordered. A compositionally biased stretch (basic and acidic residues) spans 254–267 (KEAERHPGSPRREL). Over residues 270–282 (ASGAGDASDHSGS) the composition is skewed to low complexity. The stretch at 289–421 (EKDARRFQLK…DELSKTLETA (133 aa)) forms a coiled coil. S384 carries the phosphoserine modification. Residues 466-483 (SDGSSISYQTDRTDQTPC) show a composition bias toward polar residues. A disordered region spans residues 466–488 (SDGSSISYQTDRTDQTPCTPEDD). 2 coiled-coil regions span residues 493-621 (MAKE…RERK) and 688-833 (EKWL…LFLF).

This sequence belongs to the JAKMIP family.

The protein localises to the golgi apparatus. The polypeptide is Janus kinase and microtubule-interacting protein 3 (Jakmip3) (Mus musculus (Mouse)).